A 632-amino-acid chain; its full sequence is 1-deoxy-D-xylulose-5-phosphate synthase (632 aa).

Residues 1-25 (MPTTFHEIPRKRPTTPLLDRANTPD) form a disordered region. Residues His-87 and 128–130 (GHS) contribute to the thiamine diphosphate site. Asp-159 is a binding site for Mg(2+). Thiamine diphosphate is bound by residues 160 to 161 (GA), Asn-188, Phe-295, and Glu-378. Asn-188 contacts Mg(2+).

The protein belongs to the transketolase family. DXPS subfamily. In terms of assembly, homodimer. Mg(2+) is required as a cofactor. Requires thiamine diphosphate as cofactor.

It catalyses the reaction D-glyceraldehyde 3-phosphate + pyruvate + H(+) = 1-deoxy-D-xylulose 5-phosphate + CO2. It participates in metabolic intermediate biosynthesis; 1-deoxy-D-xylulose 5-phosphate biosynthesis; 1-deoxy-D-xylulose 5-phosphate from D-glyceraldehyde 3-phosphate and pyruvate: step 1/1. Catalyzes the acyloin condensation reaction between C atoms 2 and 3 of pyruvate and glyceraldehyde 3-phosphate to yield 1-deoxy-D-xylulose-5-phosphate (DXP). This chain is 1-deoxy-D-xylulose-5-phosphate synthase, found in Pseudomonas fluorescens (strain Pf0-1).